We begin with the raw amino-acid sequence, 314 residues long: tRNA pseudouridine synthase B (314 aa).

Catalysis depends on D47, which acts as the Nucleophile.

It belongs to the pseudouridine synthase TruB family. Type 1 subfamily.

It carries out the reaction uridine(55) in tRNA = pseudouridine(55) in tRNA. Its function is as follows. Responsible for synthesis of pseudouridine from uracil-55 in the psi GC loop of transfer RNAs. The sequence is that of tRNA pseudouridine synthase B from Vibrio parahaemolyticus serotype O3:K6 (strain RIMD 2210633).